The following is a 153-amino-acid chain: Cyanate hydratase (153 aa).

Catalysis depends on residues Arg-88, Glu-91, and Ser-114.

It belongs to the cyanase family.

It carries out the reaction cyanate + hydrogencarbonate + 3 H(+) = NH4(+) + 2 CO2. In terms of biological role, catalyzes the reaction of cyanate with bicarbonate to produce ammonia and carbon dioxide. The chain is Cyanate hydratase from Mycolicibacterium vanbaalenii (strain DSM 7251 / JCM 13017 / BCRC 16820 / KCTC 9966 / NRRL B-24157 / PYR-1) (Mycobacterium vanbaalenii).